The primary structure comprises 461 residues: Aldehyde dehydrogenase LUC3 (461 aa).

215–220 is an NAD(+) binding site; it reads GSTATG. Active-site residues include Glu-237 and Cys-271.

The protein belongs to the aldehyde dehydrogenase family.

It catalyses the reaction an aldehyde + NAD(+) + H2O = a carboxylate + NADH + 2 H(+). It functions in the pathway mycotoxin biosynthesis. Its function is as follows. Aldehyde dehydrogenase; part of the gene cluster that mediates the biosynthesis of the mycotoxin lucilactaene and the lucilactaene-related compound NG-391 that act as cell cycle inhibitors with potent growth inhibitory activity against malarial parasites, moderate growth inhibitory activity against cancer cells, and no activity against bacteria and fungi. LUC3 is important for lucilactaene biosynthesis and performs the oxidation of the C-20 alcoholic analog prelucilactaene G into a carboxylic derivative that has still to be identified. The pathway begins with the hybrid PKS-NRPS synthetase LUC5 which is responsible for the condensation of one acetyl-coenzyme A (CoA) unit with six malonyl-CoA units and the amide linkage of the arising heptaketide and homoserine, subsequently releasing the first intermediate prelucilactaene B. Both the cytochrome P450 monooxygenase LUC2 and the hydrolase LUC6 function in parallel in modification of prelucilactaene B. LUC6 may catalyze the 2-pyrrolidone ring formation to form prelucilactaene C from prelucilactaene B, followed by C-15 hydroxylation by the same enzyme to give prelucilactaene D, which is then converted to prelucilactaene E by epoxidation, and finally to prelucilactaene F by cyclization. Prelucilactane D, prelucilactaene E, and prelucilactaene F can be converted to dihydrolucilactaene, NG391, and lucilactaene, respectively, via C-20 methyl group hydroxylation by the cytochrome P450 monooxygenase LUC2. However, LUC2, unlike FUS8 in fusarin C biosynthesis, is not enough for the full oxidation of the C-20 methyl group into carboxylic acid, which is a prerequisite for the final methylation step. The aldehyde dehydrogenase LUC3 is involved in the biosynthesis by further oxidation of the C-20 alcoholic analog prelucilactaene G into a carboxylic derivative. This unidentified carboxylic derivative may be converted to demethyllucilactaene. As the last step, the methyltransferase LUC1 methylates the hydroxyl group at C-21 of demethyllucilactaene to generate lucilactaene. The sequence is that of Aldehyde dehydrogenase LUC3 from Fusarium sp.